Here is a 972-residue protein sequence, read N- to C-terminus: Structural polyprotein (972 aa).

Asp26 lines the a divalent metal cation pocket. Residues 509–734 (SGGPDGKFSR…YLGELMASNA (226 aa)) form the Peptidase S50 domain. Ser633 functions as the Nucleophile in the catalytic mechanism. The active site involves Lys674. Disordered stretches follow at residues 794–817 (KLISTPPKHPEKPKGPDQHHAQEA) and 916–972 (NGGR…NAEV). Residues 801–817 (KHPEKPKGPDQHHAQEA) are compositionally biased toward basic and acidic residues. The segment covering 963–972 (FTPSGDNAEV) has biased composition (polar residues).

Homotrimer. A central divalent metal (possibly cobalt) stabilizes the VP2 trimer. As to quaternary structure, homodimer. interacts (via C-terminus) with VP1 in the cytoplasm. Interacts with VP2. In terms of processing, specific enzymatic cleavages yield mature proteins. The capsid assembly seems to be regulated by polyprotein processing. The protease VP4 cleaves itself off the polyprotein, thus releasing pre-VP2 and VP3 within the infected cell. During capsid assembly, the C-terminus of pre-VP2 is further processed by VP4, giving rise to VP2, the external capsid protein and three small peptides that all stay closely associated with the capsid.

It is found in the virion. The protein localises to the host cytoplasm. Its function is as follows. Capsid protein VP2 self assembles to form an icosahedral capsid with a T=13 symmetry, about 70 nm in diameter, and consisting of 260 VP2 trimers. The capsid encapsulates the genomic dsRNA. VP2 is also involved in attachment and entry into the host cell. The precursor of VP2 plays an important role in capsid assembly. First, pre-VP2 and VP2 oligomers assemble to form a procapsid. Then, the pre-VP2 intermediates may be processed into VP2 proteins by proteolytic cleavage mediated by VP4 to obtain the mature virion. The final capsid is composed of pentamers and hexamers but VP2 has a natural tendency to assemble into all-pentameric structures. Therefore pre-VP2 may be required to allow formation of the hexameric structures. Functionally, protease VP4 is a serine protease that cleaves the polyprotein into its final products. Pre-VP2 is first partially cleaved, and may be completely processed by VP4 upon capsid maturation. In terms of biological role, capsid protein VP3 plays a key role in virion assembly by providing a scaffold for the capsid made of VP2. May self-assemble to form a T=4-like icosahedral inner-capsid composed of at least 180 trimers. Plays a role in genomic RNA packaging by recruiting VP1 into the capsid and interacting with the dsRNA genome segments to form a ribonucleoprotein complex. Additionally, the interaction of the VP3 C-terminal tail with VP1 removes the inherent structural blockade of the polymerase active site. Thus, VP3 can also function as a transcriptional activator. Its function is as follows. Structural peptide 1 is a small peptide derived from pre-VP2 C-terminus. It destabilizes and perforates cell membranes, suggesting a role during entry. Structural peptide 2 is a small peptide derived from pVP2 C-terminus. It is not essential for the virus viability, but viral growth is affected when missing. Functionally, structural peptide 3 is a small peptide derived from pVP2 C-terminus. It is not essential for the virus viability, but viral growth is affected when missing. The polypeptide is Structural polyprotein (Infectious pancreatic necrosis virus (strain Sp) (IPNV)).